We begin with the raw amino-acid sequence, 1401 residues long: Alpha-latrotoxin-Lt1a (1401 aa).

The signal sequence occupies residues 1-20; it reads MISVGEIMERANHSLVRMRR. The furin-like endopeptidase recognition region stretch occupies residues 17-20; that stretch reads RMRR. The tract at residues 238-257 is helix H8 is the probable transmembrane region of the tetrameric pore inserted in the target cell membrane; it reads VLYALLYGTQTYVSVMFFLL. The cysteines at positions 413 and 1066 are disulfide-linked. ANK repeat units follow at residues 458–489, 490–521, 525–554, 559–589, 593–622, 626–656, 660–690, 695–723, 729–758, 762–791, 795–824, 828–857, 862–891, 895–924, 928–957, 971–1003, 1004–1033, 1035–1064, 1068–1097, 1101–1131, 1137–1166, and 1170–1199; these read LYNA…ATFD, HGRT…ELNQ, KGYT…SINS, FLQT…NINE, DGFT…DVNA, TGLT…DINA, NNIT…NANV, GLLS…NVNV, GGIT…NIEQ, EKYT…NFEA, SGAT…NWRD, NGQM…TVVD, NSDT…DINT, KGLA…NVYI, DGMN…KFEW, EECA…GNFA, ICGP…SVDG, KTDT…KVNH, NGMT…DFRR, RGTT…DINI, DKDT…DVTI, and YDKT…KFRR. The interval 1026 to 1032 is 4C4.1 epitope; that stretch reads EEFLSVD. Residues 1196–1199 are furin-like endopeptidase recognition region; sequence KFRR. Positions 1200 to 1401 are excised as a propeptide; that stretch reads EYKSSYGERS…SDGILTKKLM (202 aa).

The protein belongs to the cationic peptide 01 (latrotoxin) family. 03 (alpha-latrotoxin) subfamily. In terms of assembly, homotetramer in membranes. Processed by furin-like proteases at both the N- and C-termini. Expressed in venom gland, cephalothorax, and abdomen tissues from both males and females.

It localises to the secreted. The protein resides in the target cell membrane. Functionally, presynaptic neurotoxin that causes massive release of neurotransmitters from vertebrate (but not invertebrate) nerve terminals and endocrine cells via a complex mechanism involving activation of receptor(s) and toxin insertion into the plasma membrane with subsequent pore formation. Binds to neurexin-1-alpha (NRXN1) in a calcium dependent manner, adhesion G protein-coupled receptor L1 (ADGRL1, also termed latrophilin-1 and calcium-independent receptor of latrotoxin (CIRL)), and receptor-type tyrosine-protein phosphatase S (PTPRS), also termed PTP sigma. NRXN1 and PTPRS are suggested to provide a platform for binding and subsequent pore formation events. In contrast, binding to ADGRL1 does not involve oligomerization and channel formation, but direct downstream stimulation of the synaptic fusion machinery. The sequence is that of Alpha-latrotoxin-Lt1a from Latrodectus tredecimguttatus (Mediterranean black widow spider).